Reading from the N-terminus, the 232-residue chain is MNAETIIKMIKDSKKKTPAVCYVSGNLEGLETGTLNFVGGKDFGVIIGDFKEIQDLIARERERITGYHIDIQARNSALPLADLTKYEARIEPGAIIRDLVEIGKGAVIMMGAVINIGAVIGKGTMIDMNAVIGGRAIIGDNCHIGAGAVVAGVIEPPSATPVIIEDNVLVGANAVILEGVRVGANSVVAAGAVVTKDVPSGTVVAGIPAKVIKAFDATTADKTKIVQDLREL.

Belongs to the transferase hexapeptide repeat family. DapH subfamily.

It catalyses the reaction (S)-2,3,4,5-tetrahydrodipicolinate + acetyl-CoA + H2O = L-2-acetamido-6-oxoheptanedioate + CoA. Its pathway is amino-acid biosynthesis; L-lysine biosynthesis via DAP pathway; LL-2,6-diaminopimelate from (S)-tetrahydrodipicolinate (acetylase route): step 1/3. Functionally, catalyzes the transfer of an acetyl group from acetyl-CoA to tetrahydrodipicolinate. This chain is 2,3,4,5-tetrahydropyridine-2,6-dicarboxylate N-acetyltransferase, found in Kosmotoga olearia (strain ATCC BAA-1733 / DSM 21960 / TBF 19.5.1).